The chain runs to 240 residues: Dihydromonapterin reductase (240 aa).

Residue tyrosine 152 is the Proton acceptor of the active site.

The protein belongs to the short-chain dehydrogenases/reductases (SDR) family. FolM subfamily.

The enzyme catalyses (6S)-5,6,7,8-tetrahydrofolate + NADP(+) = 7,8-dihydrofolate + NADPH + H(+). It catalyses the reaction 7,8-dihydromonapterin + NADPH + H(+) = 5,6,7,8-tetrahydromonapterin + NADP(+). Functionally, catalyzes the reduction of dihydromonapterin to tetrahydromonapterin. Also has lower activity with dihydrofolate. The sequence is that of Dihydromonapterin reductase (folM) from Escherichia coli O1:K1 / APEC.